The following is a 233-amino-acid chain: MIELKHVTFGYNKKQMVLQDINITIPDGENVGILGESGCGKSTLASLVLGLFKPVKGEIYLSDNAVLPIFQHPLTSFNPDWTIETSLKEALYYYRGLTDNTAQDQLLIQHLSTFELNAQLLTKLPSEVSGGQLQRFNVMRSLLAQPRVLICDEITSNLDVIAEQNVINILKAQTITNLNHFIVISHDLSVLQRLVNRIIVLKDGMIVDDFTIEELFNVDRHPYTKELVQAFSY.

The region spanning 2-228 is the ABC transporter domain; sequence IELKHVTFGY…DRHPYTKELV (227 aa). 35–42 is an ATP binding site; it reads GESGCGKS.

It belongs to the ABC transporter superfamily. In terms of assembly, the complex is composed of two ATP-binding proteins (NikD and NikE), two transmembrane proteins (NikB and NikC) and a solute-binding protein (NikA).

Its subcellular location is the cell membrane. It carries out the reaction Ni(2+)(out) + ATP + H2O = Ni(2+)(in) + ADP + phosphate + H(+). Its function is as follows. Part of the ABC transporter complex NikABCDE (Opp2) involved in nickel import. Probably responsible for energy coupling to the transport system. This chain is Nickel import system ATP-binding protein NikE, found in Staphylococcus aureus (strain MRSA252).